A 169-amino-acid chain; its full sequence is Glutathione peroxidase (169 aa).

Selenocysteine 43 is an active-site residue. Residue selenocysteine 43 is a non-standard amino acid, selenocysteine.

The protein belongs to the glutathione peroxidase family.

The enzyme catalyses 2 glutathione + H2O2 = glutathione disulfide + 2 H2O. The sequence is that of Glutathione peroxidase (GPX1) from Schistosoma mansoni (Blood fluke).